The chain runs to 201 residues: MDHCPRLYLASASPRRRELLTQVGLAHTVLHLPAPPGEDEPQWPGEAAADYVLRTARDKAQRGQIWMREQNLPALPLLAADTTVILDGRVLGKPADRSDAVAMLAALSGTKHEVRTAVVLVHEDRLYEAVSITHVSMRALTAAERERYCDSGEPYGKAGAYGIQGLAGSFISHIDGSYSGVMGLPLFETAELLRRAGIALP.

The active-site Proton acceptor is Asp-81.

This sequence belongs to the Maf family. YhdE subfamily. A divalent metal cation is required as a cofactor.

It localises to the cytoplasm. It catalyses the reaction dTTP + H2O = dTMP + diphosphate + H(+). The enzyme catalyses UTP + H2O = UMP + diphosphate + H(+). In terms of biological role, nucleoside triphosphate pyrophosphatase that hydrolyzes dTTP and UTP. May have a dual role in cell division arrest and in preventing the incorporation of modified nucleotides into cellular nucleic acids. The protein is dTTP/UTP pyrophosphatase of Bordetella avium (strain 197N).